We begin with the raw amino-acid sequence, 20 residues long: Tetracycline resistance leader peptide (20 aa).

The tract at residues M1–L20 is disordered.

In Bacillus subtilis (strain 168), this protein is Tetracycline resistance leader peptide (tetL).